The following is a 192-amino-acid chain: Der GTPase-activating protein YihI (192 aa).

The disordered stretch occupies residues 1–80 (MSRTKKTRRI…KAAVKEVKDP (80 aa)). 3 stretches are compositionally biased toward basic and acidic residues: residues 9-25 (RITD…KPEQ), 37-48 (TRYELDAKAREE), and 65-80 (DPAE…VKDP).

The protein belongs to the YihI family. As to quaternary structure, interacts with Der.

Its function is as follows. A GTPase-activating protein (GAP) that modifies Der/EngA GTPase function. May play a role in ribosome biogenesis. The sequence is that of Der GTPase-activating protein YihI from Actinobacillus pleuropneumoniae serotype 7 (strain AP76).